The sequence spans 503 residues: ATP-dependent RNA helicase dbp3 (503 aa).

The segment covering 1 to 13 has biased composition (basic and acidic residues); sequence MGKRVSHNEGADR. A disordered region spans residues 1–37; the sequence is MGKRVSHNEGADRRPKKKAKNEKPEKETMESPAADVT. Positions 104–112 match the Q motif motif; that stretch reads SFASPTPIQ. A Helicase ATP-binding domain is found at 116 to 292; sequence WPLLFAGRDV…ATFMTSAVTV (177 aa). ATP is bound at residue 129-136; the sequence is AETGSGKT. Positions 239-242 match the DEAD box motif; the sequence is DEAD. Positions 323–472 constitute a Helicase C-terminal domain; the sequence is RLVQLLSENQ…EVPQELLKFG (150 aa).

It belongs to the DEAD box helicase family. DDX5/DBP2 subfamily.

The protein localises to the nucleus. It localises to the nucleolus. The enzyme catalyses ATP + H2O = ADP + phosphate + H(+). ATP-dependent RNA helicase required for 60S ribosomal subunit synthesis. Involved in efficient pre-rRNA processing, predominantly at site A3, which is necessary for the normal formation of 25S and 5.8S rRNAs. This is ATP-dependent RNA helicase dbp3 (dbp3) from Aspergillus clavatus (strain ATCC 1007 / CBS 513.65 / DSM 816 / NCTC 3887 / NRRL 1 / QM 1276 / 107).